Reading from the N-terminus, the 350-residue chain is Nicotinate-nucleotide--dimethylbenzimidazole phosphoribosyltransferase (350 aa).

Residue Glu317 is the Proton acceptor of the active site.

It belongs to the CobT family.

The catalysed reaction is 5,6-dimethylbenzimidazole + nicotinate beta-D-ribonucleotide = alpha-ribazole 5'-phosphate + nicotinate + H(+). It functions in the pathway nucleoside biosynthesis; alpha-ribazole biosynthesis; alpha-ribazole from 5,6-dimethylbenzimidazole: step 1/2. In terms of biological role, catalyzes the synthesis of alpha-ribazole-5'-phosphate from nicotinate mononucleotide (NAMN) and 5,6-dimethylbenzimidazole (DMB). The protein is Nicotinate-nucleotide--dimethylbenzimidazole phosphoribosyltransferase of Shewanella sp. (strain W3-18-1).